The chain runs to 403 residues: S-adenosylmethionine synthase (403 aa).

141 to 146 is a binding site for ATP; it reads GQGSVD.

It belongs to the AdoMet synthase 2 family. Mg(2+) serves as cofactor.

The enzyme catalyses L-methionine + ATP + H2O = S-adenosyl-L-methionine + phosphate + diphosphate. The protein operates within amino-acid biosynthesis; S-adenosyl-L-methionine biosynthesis; S-adenosyl-L-methionine from L-methionine: step 1/1. In terms of biological role, catalyzes the formation of S-adenosylmethionine from methionine and ATP. The protein is S-adenosylmethionine synthase of Methanococcus aeolicus (strain ATCC BAA-1280 / DSM 17508 / OCM 812 / Nankai-3).